Consider the following 486-residue polypeptide: Cardiolipin synthase A (486 aa).

The next 2 helical transmembrane spans lie at 3-23 (IFYN…IANI) and 38-58 (MSWL…WFFF). PLD phosphodiesterase domains follow at residues 219–246 (VDVR…VDPY) and 399–426 (QKGL…DMRS). Residues H224, K226, D231, H404, K406, and D411 contribute to the active site.

It belongs to the phospholipase D family. Cardiolipin synthase subfamily. ClsA sub-subfamily.

It is found in the cell inner membrane. It catalyses the reaction 2 a 1,2-diacyl-sn-glycero-3-phospho-(1'-sn-glycerol) = a cardiolipin + glycerol. Functionally, catalyzes the reversible phosphatidyl group transfer from one phosphatidylglycerol molecule to another to form cardiolipin (CL) (diphosphatidylglycerol) and glycerol. The protein is Cardiolipin synthase A of Buchnera aphidicola subsp. Acyrthosiphon pisum (strain APS) (Acyrthosiphon pisum symbiotic bacterium).